The sequence spans 467 residues: Chromosomal replication initiator protein DnaA (467 aa).

The segment at 1 to 90 (MSLSLWQQCL…KPVTQTPQAA (90 aa)) is domain I, interacts with DnaA modulators. The interval 91-130 (VTSNVAAPAQVAQTQPQRAAPSTRSGWDNVPAPAEPTYRS) is domain II. Residues 98-111 (PAQVAQTQPQRAAP) show a composition bias toward low complexity. The disordered stretch occupies residues 98–119 (PAQVAQTQPQRAAPSTRSGWDN). Residues 131–347 (NVNVKHTFDN…GALNRVIANA (217 aa)) form a domain III, AAA+ region region. Residues Gly175, Gly177, Lys178, and Thr179 each coordinate ATP. Residues 348–467 (NFTGRAITID…FSNLIRTLSS (120 aa)) are domain IV, binds dsDNA.

The protein belongs to the DnaA family. In terms of assembly, oligomerizes as a right-handed, spiral filament on DNA at oriC.

It is found in the cytoplasm. Plays an essential role in the initiation and regulation of chromosomal replication. ATP-DnaA binds to the origin of replication (oriC) to initiate formation of the DNA replication initiation complex once per cell cycle. Binds the DnaA box (a 9 base pair repeat at the origin) and separates the double-stranded (ds)DNA. Forms a right-handed helical filament on oriC DNA; dsDNA binds to the exterior of the filament while single-stranded (ss)DNA is stabiized in the filament's interior. The ATP-DnaA-oriC complex binds and stabilizes one strand of the AT-rich DNA unwinding element (DUE), permitting loading of DNA polymerase. After initiation quickly degrades to an ADP-DnaA complex that is not apt for DNA replication. Binds acidic phospholipids. This is Chromosomal replication initiator protein DnaA from Shigella sonnei (strain Ss046).